Here is a 540-residue protein sequence, read N- to C-terminus: E3 ubiquitin-protein ligase rnf8-A (540 aa).

One can recognise an FHA domain in the interval 30 to 84 (VTLGRGLGVTYQLKPTLCPLMISRTHCLFKQNTGGEWTVTDNKSLNGVWRNKERL). The segment at 128-205 (LIRPLPDKTK…SGTESRLNDS (78 aa)) is disordered. Composition is skewed to polar residues over residues 152–162 (ASGNEGPSNFS) and 179–200 (SSHT…GTES). The RING-type zinc-finger motif lies at 382–420 (CIICSEHFIEAVTLNCAHSFCSYCIKSWKKRKEECPICR). The interval 517-540 (GTDELDSSDFESDDDEEEDSFLII) is disordered. Acidic residues predominate over residues 519 to 540 (DELDSSDFESDDDEEEDSFLII).

Belongs to the RNF8 family. Homodimer. Forms a E2-E3 ubiquitin ligase complex composed of the rnf8 homodimer and a E2 heterodimer of ube2n and ube2v2.

The protein resides in the nucleus. The catalysed reaction is S-ubiquitinyl-[E2 ubiquitin-conjugating enzyme]-L-cysteine + [acceptor protein]-L-lysine = [E2 ubiquitin-conjugating enzyme]-L-cysteine + N(6)-ubiquitinyl-[acceptor protein]-L-lysine.. It participates in protein modification; protein ubiquitination. Its function is as follows. E3 ubiquitin-protein ligase that plays a key role in DNA damage signaling via 2 distinct roles: by mediating the 'Lys-63'-linked ubiquitination of histones H2A and H2AX and promoting the recruitment of DNA repair proteins at double-strand breaks (DSBs) sites, and by catalyzing 'Lys-48'-linked ubiquitination to remove target proteins from DNA damage sites. Following DNA DSBs, it is recruited to the sites of damage by ATM-phosphorylated mdc1 and catalyzes the 'Lys-63'-linked ubiquitination of histones H2A and H2AX, thereby promoting the formation of tp53bp1 and brca1 ionizing radiation-induced foci (IRIF). H2A ubiquitination also mediates the ATM-dependent transcriptional silencing at regions flanking DSBs in cis, a mechanism to avoid collision between transcription and repair intermediates. Also catalyzes the formation of 'Lys-48'-linked polyubiquitin chains, leading to degradation of substrate proteins. In addition to its function in damage signaling, also plays a role in higher-order chromatin structure by mediating extensive chromatin decondensation. This Xenopus laevis (African clawed frog) protein is E3 ubiquitin-protein ligase rnf8-A.